The primary structure comprises 284 residues: tRNA pseudouridine synthase A (284 aa).

Asp-62 functions as the Nucleophile in the catalytic mechanism. Tyr-123 serves as a coordination point for substrate.

It belongs to the tRNA pseudouridine synthase TruA family. In terms of assembly, homodimer.

It catalyses the reaction uridine(38/39/40) in tRNA = pseudouridine(38/39/40) in tRNA. In terms of biological role, formation of pseudouridine at positions 38, 39 and 40 in the anticodon stem and loop of transfer RNAs. This chain is tRNA pseudouridine synthase A, found in Streptomyces griseus subsp. griseus (strain JCM 4626 / CBS 651.72 / NBRC 13350 / KCC S-0626 / ISP 5235).